A 158-amino-acid polypeptide reads, in one-letter code: NADH-quinone oxidoreductase subunit B (158 aa).

Residues cysteine 37, cysteine 38, cysteine 102, and cysteine 132 each contribute to the [4Fe-4S] cluster site.

The protein belongs to the complex I 20 kDa subunit family. In terms of assembly, NDH-1 is composed of 14 different subunits. Subunits NuoB, C, D, E, F, and G constitute the peripheral sector of the complex. It depends on [4Fe-4S] cluster as a cofactor.

It is found in the cell inner membrane. The enzyme catalyses a quinone + NADH + 5 H(+)(in) = a quinol + NAD(+) + 4 H(+)(out). Its function is as follows. NDH-1 shuttles electrons from NADH, via FMN and iron-sulfur (Fe-S) centers, to quinones in the respiratory chain. Couples the redox reaction to proton translocation (for every two electrons transferred, four hydrogen ions are translocated across the cytoplasmic membrane), and thus conserves the redox energy in a proton gradient. The sequence is that of NADH-quinone oxidoreductase subunit B from Alkalilimnicola ehrlichii (strain ATCC BAA-1101 / DSM 17681 / MLHE-1).